Consider the following 581-residue polypeptide: Peptidyl-prolyl cis-trans isomerase FKBP10 (581 aa).

The N-terminal stretch at 1-33 (MFLVGSSSHTLHRLRILPLLLLLQTLERGLGRA) is a signal peptide. PPIase FKBP-type domains are found at residues 61-149 (GDFV…LDVW), 173-261 (SDFV…LDVH), and 285-373 (GDFM…IDFH). Residues N69, N181, N293, N309, N351, N392, and N406 are each glycosylated (N-linked (GlcNAc...) asparagine). In terms of domain architecture, PPIase FKBP-type 4 spans 398 to 485 (GDFIRYHYNC…LFEVELVSRE (88 aa)). EF-hand domains follow at residues 496-531 (WYQD…QVNE) and 541-576 (DPDK…DQER). The Ca(2+) site is built by D509, N511, D513, E515, E520, D554, N556, D558, K560, and E565. The tract at residues 533–581 (KGRLMPGQDPDKTISDMFQNQDRNQDGKITAEELKLKSDEDQERVHEEL) is disordered. The segment covering 555–581 (RNQDGKITAEELKLKSDEDQERVHEEL) has biased composition (basic and acidic residues). Residues 578 to 581 (HEEL) carry the Prevents secretion from ER motif.

Post-translationally, N-glycosylated. In terms of processing, phosphorylated. Expressed in aorta, brain, heart, kidney, lung, spleen and testis. Not detected in liver.

It is found in the endoplasmic reticulum lumen. The enzyme catalyses [protein]-peptidylproline (omega=180) = [protein]-peptidylproline (omega=0). With respect to regulation, inhibited by both FK506 and rapamycin, but not by cyclosporin A. In terms of biological role, PPIases accelerate the folding of proteins during protein synthesis. This is Peptidyl-prolyl cis-trans isomerase FKBP10 (Fkbp10) from Mus musculus (Mouse).